The chain runs to 474 residues: Proline--tRNA ligase (474 aa).

The protein belongs to the class-II aminoacyl-tRNA synthetase family. ProS type 3 subfamily. In terms of assembly, homodimer.

The protein resides in the cytoplasm. It catalyses the reaction tRNA(Pro) + L-proline + ATP = L-prolyl-tRNA(Pro) + AMP + diphosphate. Functionally, catalyzes the attachment of proline to tRNA(Pro) in a two-step reaction: proline is first activated by ATP to form Pro-AMP and then transferred to the acceptor end of tRNA(Pro). The sequence is that of Proline--tRNA ligase from Phytoplasma australiense.